A 209-amino-acid chain; its full sequence is Large ribosomal subunit protein uL3 (209 aa).

It belongs to the universal ribosomal protein uL3 family. In terms of assembly, part of the 50S ribosomal subunit. Forms a cluster with proteins L14 and L19.

One of the primary rRNA binding proteins, it binds directly near the 3'-end of the 23S rRNA, where it nucleates assembly of the 50S subunit. The chain is Large ribosomal subunit protein uL3 from Clostridium botulinum (strain Okra / Type B1).